The chain runs to 137 residues: MTTKCTVMAVVLAACICLQVLPQAYGRSTQGYGRMDKLLATLMGSSEGGALESASQHSLEKRQIFDPSCKGLYDRGLFSDLEHVCKDCYNLYRNPQVTSACRVNCYSNRVFRQCMEDLLLMEDFDKYARAIQTVGKK.

The signal sequence occupies residues 1–26 (MTTKCTVMAVVLAACICLQVLPQAYG). The residue at position 63 (Gln-63) is a Pyrrolidone carboxylic acid. 3 cysteine pairs are disulfide-bonded: Cys-69-Cys-105, Cys-85-Cys-101, and Cys-88-Cys-114. At Val-134 the chain carries Valine amide.

This sequence belongs to the arthropod CHH/MIH/GIH/VIH hormone family. In terms of tissue distribution, produced by the medulla terminalis X-organ in the eyestalks and transported to the sinus gland where it is stored and released.

The protein localises to the secreted. In terms of biological role, represses the synthesis of methyl farnesoate, the precursor of insect juvenile hormone III in the mandibular organ. Also has hyperglycemic activity. In Libinia emarginata (Portly spider crab), this protein is Mandibular organ-inhibiting hormone.